The sequence spans 922 residues: Phosphoenolpyruvate carboxylase (922 aa).

Residues 1–20 (MTKTLHARPSAATDTTFAPP) are disordered. Catalysis depends on residues His-142 and Lys-581.

The protein belongs to the PEPCase type 1 family. It depends on Mg(2+) as a cofactor.

It carries out the reaction oxaloacetate + phosphate = phosphoenolpyruvate + hydrogencarbonate. In terms of biological role, forms oxaloacetate, a four-carbon dicarboxylic acid source for the tricarboxylic acid cycle. The chain is Phosphoenolpyruvate carboxylase (ppc) from Methylorubrum extorquens (strain ATCC 14718 / DSM 1338 / JCM 2805 / NCIMB 9133 / AM1) (Methylobacterium extorquens).